Consider the following 183-residue polypeptide: Ferritin heavy chain (183 aa).

N-acetylmethionine is present on methionine 1. The residue at position 2 (threonine 2) is an N-acetylthreonine; in Ferritin heavy chain, N-terminally processed. In terms of domain architecture, Ferritin-like diiron spans 11 to 160; it reads QNYHQDSEAA…DHVTNLRKMG (150 aa). Positions 28, 63, 66, 108, and 142 each coordinate Fe cation. 2 positions are modified to phosphoserine: serine 179 and serine 183.

This sequence belongs to the ferritin family. As to quaternary structure, oligomer of 24 subunits. There are two types of subunits: L (light) chain and H (heavy) chain. The major chain can be light or heavy, depending on the species and tissue type. The functional molecule forms a roughly spherical shell with a diameter of 12 nm and contains a central cavity into which the insoluble mineral iron core is deposited. Interacts with NCOA4; NCOA4 promotes targeting of the iron-binding ferritin complex to autolysosomes following starvation or iron depletion.

The protein localises to the cytoplasm. It is found in the lysosome. The protein resides in the cytoplasmic vesicle. It localises to the autophagosome. The enzyme catalyses 4 Fe(2+) + O2 + 4 H(+) = 4 Fe(3+) + 2 H2O. Stores iron in a soluble, non-toxic, readily available form. Important for iron homeostasis. Has ferroxidase activity. Iron is taken up in the ferrous form and deposited as ferric hydroxides after oxidation. Also plays a role in delivery of iron to cells. Mediates iron uptake in capsule cells of the developing kidney. Delivery to lysosomes is mediated by the cargo receptor NCOA4 for autophagic degradation and release of iron. The polypeptide is Ferritin heavy chain (FTH1) (Canis lupus familiaris (Dog)).